We begin with the raw amino-acid sequence, 249 residues long: Dihydroneopterin 2',3'-cyclic phosphate phosphodiesterase (249 aa).

One can recognise an HD domain in the interval 58-172 (LIEHTISVTK…VHYADEADSK (115 aa)).

As to quaternary structure, homododecamer. Fe(2+) is required as a cofactor. The cofactor is Zn(2+).

It catalyses the reaction 7,8-dihydroneopterin 2',3'-cyclic phosphate + H2O = 7,8-dihydroneopterin 3'-phosphate + H(+). The enzyme catalyses 7,8-dihydroneopterin 2',3'-cyclic phosphate + H2O = 7,8-dihydroneopterin 2'-phosphate + H(+). It functions in the pathway cofactor biosynthesis; 5,6,7,8-tetrahydromethanopterin biosynthesis. Functionally, cyclic phosphodiesterase that hydrolyzes the cyclic phosphate of 7,8-dihydroneopterin 2',3'-cyclic phosphate (H2N-cP) and converts it to a mixture of 7,8-dihydroneopterin 2'-phosphate (H2N-2'P) and 7,8-dihydroneopterin 3'-phosphate (H2N-3'P). Is also able to utilize other phosphodiesters as substrates in vitro: hydrolysis of bis-pNPP and pNPPC produces nitrophenyl phosphate, and that of 2',3'-cAMP produces 3'-AMP. ATP, 3',5'-cAMP, GTP, 3',5'-cGMP, and 4',5'-cFMN cannot serve as substrates. The polypeptide is Dihydroneopterin 2',3'-cyclic phosphate phosphodiesterase (mptB) (Methanocaldococcus jannaschii (strain ATCC 43067 / DSM 2661 / JAL-1 / JCM 10045 / NBRC 100440) (Methanococcus jannaschii)).